A 58-amino-acid polypeptide reads, in one-letter code: Conotoxin Im5.4 (58 aa).

The first 18 residues, 1–18 (MRCLPVVVFLLLLLSAAA), serve as a signal peptide directing secretion. The propeptide occupies 19–28 (APGVGSKTER).

This sequence belongs to the conotoxin T superfamily. Contains 2 disulfide bonds that can be either 'C1-C3, C2-C4' or 'C1-C4, C2-C3', since these disulfide connectivities have been observed for conotoxins with cysteine framework V (for examples, see AC P0DQQ7 and AC P81755). As to expression, expressed by the venom duct.

The protein localises to the secreted. Functionally, probable neurotoxin. This Conus imperialis (Imperial cone) protein is Conotoxin Im5.4.